The chain runs to 38 residues: Turripeptide GpIAa (38 aa).

It belongs to the turripeptide family. In terms of tissue distribution, expressed by the venom duct.

The protein localises to the secreted. The polypeptide is Turripeptide GpIAa (Cryptogemma periscelida (Atlantic gem-turris)).